Here is a 299-residue protein sequence, read N- to C-terminus: uncharacterized protein (299 aa).

This is an uncharacterized protein from Escherichia coli (strain K12).